Consider the following 548-residue polypeptide: Protoporphyrinogen oxidase, chloroplastic (548 aa).

The N-terminal 50 residues, 1–50 (MTTTPIANHPNIFTHQSSSSPLAFLNRTSFIPFSSISKRNSVNCNGWRTR), are a transit peptide targeting the chloroplast. Residues 78–83 (GAGISG), 101–102 (EA), and 123–126 (GPNS) contribute to the FAD site. Over residues 265–279 (KERSSTPKAPRDPRL) the composition is skewed to basic and acidic residues. The tract at residues 265-287 (KERSSTPKAPRDPRLPKPKGQTV) is disordered. 522-524 (VAL) contacts FAD.

Belongs to the protoporphyrinogen/coproporphyrinogen oxidase family. Protoporphyrinogen oxidase subfamily. In terms of assembly, homodimer. The cofactor is FAD.

It localises to the plastid. Its subcellular location is the chloroplast. The catalysed reaction is protoporphyrinogen IX + 3 O2 = protoporphyrin IX + 3 H2O2. It participates in porphyrin-containing compound metabolism; protoporphyrin-IX biosynthesis; protoporphyrin-IX from protoporphyrinogen-IX: step 1/1. The protein operates within porphyrin-containing compound metabolism; chlorophyll biosynthesis. Its function is as follows. Catalyzes the 6-electron oxidation of protoporphyrinogen-IX to form protoporphyrin-IX. In Nicotiana tabacum (Common tobacco), this protein is Protoporphyrinogen oxidase, chloroplastic (PPXI).